The primary structure comprises 336 residues: Probable allantoicase (336 aa).

Belongs to the allantoicase family.

The enzyme catalyses allantoate + H2O = (S)-ureidoglycolate + urea. The protein operates within nitrogen metabolism; (S)-allantoin degradation; (S)-ureidoglycolate from allantoate (aminidohydrolase route): step 1/1. The polypeptide is Probable allantoicase (Acinetobacter baumannii (strain ATCC 17978 / DSM 105126 / CIP 53.77 / LMG 1025 / NCDC KC755 / 5377)).